The sequence spans 218 residues: Thiopurine S-methyltransferase (218 aa).

Trp10, Leu45, Glu66, and Arg123 together coordinate S-adenosyl-L-methionine.

The protein belongs to the class I-like SAM-binding methyltransferase superfamily. TPMT family.

The protein localises to the cytoplasm. It catalyses the reaction S-adenosyl-L-methionine + a thiopurine = S-adenosyl-L-homocysteine + a thiopurine S-methylether.. In Pseudomonas fluorescens (strain SBW25), this protein is Thiopurine S-methyltransferase.